The following is an 80-amino-acid chain: Omega-conotoxin-like 2/7 (80 aa).

The N-terminal stretch at 1 to 22 is a signal peptide; that stretch reads MKLTCMMIVAVMFLTASIFITA. A propeptide spanning residues 23 to 51 is cleaved from the precursor; that stretch reads DNSRNGIENLPRMRRHEMKKPKASKLNKR. Disulfide bonds link C53–C71, C60–C75, and C70–C79.

It belongs to the conotoxin O1 superfamily. Expressed by the venom duct.

The protein localises to the secreted. Omega-conotoxins act at presynaptic membranes, they bind and block voltage-gated calcium channels (Cav). In Conus imperialis (Imperial cone), this protein is Omega-conotoxin-like 2/7.